The sequence spans 399 residues: C-type lectin domain family 4 member M (399 aa).

Residues 1–49 lie on the Cytoplasmic side of the membrane; sequence MSDSKEQRVQPLGLLEEDPTTSGIRLFPRDFQFQQTHGHKSSTGCLGHG. The short motif at 14-15 is the Endocytosis signal element; sequence LL. The chain crosses the membrane as a helical; Signal-anchor for type II membrane protein span at residues 50-70; it reads PLVLQLLSFTLLAGVLVAILV. The Extracellular segment spans residues 71–399; sequence QVYKVPSSLS…KKPTACFRDE (329 aa). A glycan (N-linked (GlcNAc...) asparagine) is linked at Asn-92. Tandem repeats lie at residues 108 to 130, 131 to 153, 154 to 176, 177 to 199, 200 to 222, 223 to 245, and 246 to 268. The interval 108-269 is 7 X approximate tandem repeats; the sequence is KLQEIYQELI…AFERLCCRCP (162 aa). 4 disulfide bridges follow: Cys-265–Cys-395, Cys-268–Cys-279, Cys-296–Cys-389, and Cys-368–Cys-381. The region spanning 274 to 390 is the C-type lectin domain; the sequence is FFQGNCYFIS…CNVDNYWICK (117 aa). The Ca(2+) site is built by Glu-359, Asn-361, Ser-363, Glu-366, Asn-377, and Asp-378. Asn-361 carries N-linked (GlcNAc...) asparagine glycosylation.

In terms of assembly, homotetramer.

Its subcellular location is the membrane. In terms of biological role, probable pathogen-recognition receptor involved in peripheral immune surveillance in liver. May mediate the endocytosis of pathogens which are subsequently degraded in lysosomal compartments. Probably recognizes in a calcium-dependent manner high mannose N-linked oligosaccharides in a variety of pathogen antigens. Is a receptor for ICAM3, probably by binding to mannose-like carbohydrates. The sequence is that of C-type lectin domain family 4 member M (CLEC4M) from Hylobates lar (Lar gibbon).